The following is a 559-amino-acid chain: Asparagine--tRNA ligase, cytoplasmic (559 aa).

Position 72 is a phosphoserine (Ser-72). Positions 82–102 (HREQMKNDSREKKEAEDNLRR) are disordered. Lys-255 bears the N6-acetyllysine mark. Ser-493 is modified (phosphoserine). Residue Lys-501 is modified to N6-acetyllysine.

It belongs to the class-II aminoacyl-tRNA synthetase family. Homodimer.

It localises to the cytoplasm. The enzyme catalyses tRNA(Asn) + L-asparagine + ATP = L-asparaginyl-tRNA(Asn) + AMP + diphosphate + H(+). Its function is as follows. Catalyzes the attachment of asparagine to tRNA(Asn) in a two-step reaction: asparagine is first activated by ATP to form Asn-AMP and then transferred to the acceptor end of tRNA(Asn). In addition to its essential role in protein synthesis, acts as a signaling molecule that induced migration of CCR3-expressing cells. Has an essential role in the development of the cerebral cortex, being required for proper proliferation of radial glial cells. This chain is Asparagine--tRNA ligase, cytoplasmic, found in Mus musculus (Mouse).